The sequence spans 628 residues: MKPAQDTRFDYVKIGLASPERVRQWGERTLPNGVVVGEVTKPETINYRTLKPEMDGLFCERIFGPSKDWECWCGKYKRVRHRGIVCERCGVEVTESRVRRHRMGYIKLAAPVTHVWYLKGIPSYMSILLDMALRDVEQIVYFNAYVVLDPGNASNLSYKQLLTEDQWIEIEDQIYAEDSDLYGIEVGIGAEAIQRLLQEMNLEEIAEILREEIAQSKGQKRAKLIKRLRVIDNFIATGSLPAWMVLDVIPVIPPDLRPMVQLDGGRFATSDLNDLYRRVINRNNRLARLQEILAPEIIVRNEKRMLQEAVDALIDNGRRGRTVVGANNRPLKSLSDIIEGKQGRFRQNLLGKRVDYSGRSVIVVGPKLKIYQCGLPREMAIELFQPFVIHRLIRLGLVNNIKAAKKLIIKGDPSVWNVLEEVITGHPVLLNRAPTLHRLGIQAFEPILVEGRAIQLHPLVCPAFNADFDGDQMAVHVPLSLESQAEARLLMLACHNILSPATGKPIVAPSQDMVLGCYYLTAENPQSQKGNGRYFGNIDDAVKAFEHGLVDLHAYVWLRSEDPNEEVVTDLPDTEVLKTETLEDGSVIKHYRERRVREIDGEAVSQFIRTTPGRIIYNKTIQDALTVA.

The Zn(2+) site is built by C71, C73, C86, and C89. Residues D467, D469, and D471 each coordinate Mg(2+).

Belongs to the RNA polymerase beta' chain family. RpoC1 subfamily. In cyanobacteria the RNAP catalytic core is composed of 2 alpha, 1 beta, 1 beta', 1 gamma and 1 omega subunit. When a sigma factor is associated with the core the holoenzyme is formed, which can initiate transcription. Mg(2+) serves as cofactor. It depends on Zn(2+) as a cofactor.

The enzyme catalyses RNA(n) + a ribonucleoside 5'-triphosphate = RNA(n+1) + diphosphate. Its function is as follows. DNA-dependent RNA polymerase catalyzes the transcription of DNA into RNA using the four ribonucleoside triphosphates as substrates. The polypeptide is DNA-directed RNA polymerase subunit gamma (Crocosphaera subtropica (strain ATCC 51142 / BH68) (Cyanothece sp. (strain ATCC 51142))).